A 164-amino-acid chain; its full sequence is Transcriptional repressor NrdR (164 aa).

A zinc finger lies at 3 to 34 (CPKCNYHKSSVVDSRQAEDGNTIRRRRECEQC). The ATP-cone domain maps to 49-139 (LLVIKKDGTR…VYKSFKDVDE (91 aa)).

The protein belongs to the NrdR family. It depends on Zn(2+) as a cofactor.

Negatively regulates transcription of bacterial ribonucleotide reductase nrd genes and operons by binding to NrdR-boxes. In Streptococcus pyogenes serotype M5 (strain Manfredo), this protein is Transcriptional repressor NrdR.